The sequence spans 189 residues: dCTP deaminase (189 aa).

DCTP contacts are provided by residues 112 to 117 (KSTYAR), 136 to 138 (TLE), Gln-157, Tyr-171, and Gln-181. Glu-138 functions as the Proton donor/acceptor in the catalytic mechanism.

It belongs to the dCTP deaminase family. Homotrimer.

It catalyses the reaction dCTP + H2O + H(+) = dUTP + NH4(+). It functions in the pathway pyrimidine metabolism; dUMP biosynthesis; dUMP from dCTP (dUTP route): step 1/2. In terms of biological role, catalyzes the deamination of dCTP to dUTP. The polypeptide is dCTP deaminase (Leptothrix cholodnii (strain ATCC 51168 / LMG 8142 / SP-6) (Leptothrix discophora (strain SP-6))).